Consider the following 85-residue polypeptide: Conotoxin MaIr94 (85 aa).

Residues 1-22 (MKLTCVLIITVLFLTACQLTAA) form the signal peptide. The propeptide occupies 23 to 49 (GNSRDKQEDPVVRSSGEVQRSEDIKLA). Cystine bridges form between cysteine 52–cysteine 69, cysteine 59–cysteine 73, and cysteine 68–cysteine 84.

It belongs to the conotoxin O1 superfamily. In terms of tissue distribution, expressed by the venom duct.

The protein resides in the secreted. Functionally, produces no obvious effect on ionic currents when tested on the mouse dorsal rooted ganglia (DRG). The protein is Conotoxin MaIr94 of Conus marmoreus (Marble cone).